We begin with the raw amino-acid sequence, 153 residues long: MKLLKKGTTVLFVMIMAVMLVACGDKEESKTFSLSQNGVDSKLTYTYKGDKVTKQTAENTMLYTSMGIKTKEEAEKMLKETSEKFQNIEGLKESIEYKDDKAIETLEVDYTKISSEDLKKLPGMASTGDVSKGISMKESEKMLKSQGFKEVEK.

An N-terminal signal peptide occupies residues 1-22; that stretch reads MKLLKKGTTVLFVMIMAVMLVA. Cys23 carries the N-palmitoyl cysteine lipid modification. Cys23 carries S-diacylglycerol cysteine lipidation. Positions 121–153 are disordered; the sequence is LPGMASTGDVSKGISMKESEKMLKSQGFKEVEK. Residues 135 to 153 are compositionally biased toward basic and acidic residues; the sequence is SMKESEKMLKSQGFKEVEK.

It to E.coli YehR.

The protein localises to the cell membrane. This is an uncharacterized protein from Listeria innocua serovar 6a (strain ATCC BAA-680 / CLIP 11262).